The primary structure comprises 134 residues: Ribosome-binding factor A (134 aa).

The protein belongs to the RbfA family. Monomer. Binds 30S ribosomal subunits, but not 50S ribosomal subunits or 70S ribosomes.

The protein resides in the cytoplasm. Its function is as follows. One of several proteins that assist in the late maturation steps of the functional core of the 30S ribosomal subunit. Associates with free 30S ribosomal subunits (but not with 30S subunits that are part of 70S ribosomes or polysomes). Required for efficient processing of 16S rRNA. May interact with the 5'-terminal helix region of 16S rRNA. The protein is Ribosome-binding factor A of Synechococcus sp. (strain CC9311).